A 271-amino-acid chain; its full sequence is MAGAPRRQRAVGRVRLGVNAIAGKSRVSDVAEAGSLRVRMPRVDGPAVEGVLVNTAGGVACGDHFTIEVKAEAGAHAVVATPAAEKIYRSDGETARIDVAITVEAGAQVDWLPQETLLYDAARLARRFTVDLAPDATFLAFEAIAFGRVARGEEMRTGHLEDHWQVTRGGGLIYADAVRVSGPLGELLRRPTVAAGNRAWATLLYVAPDAEARLDEARALMESARSECGASAWNGLLAARWLAPDIETLRRDAVAFLNAFRGAPLPRVWAL.

It belongs to the UreD family. In terms of assembly, ureD, UreF and UreG form a complex that acts as a GTP-hydrolysis-dependent molecular chaperone, activating the urease apoprotein by helping to assemble the nickel containing metallocenter of UreC. The UreE protein probably delivers the nickel.

It localises to the cytoplasm. Functionally, required for maturation of urease via the functional incorporation of the urease nickel metallocenter. The polypeptide is Urease accessory protein UreD (Azorhizobium caulinodans (strain ATCC 43989 / DSM 5975 / JCM 20966 / LMG 6465 / NBRC 14845 / NCIMB 13405 / ORS 571)).